The sequence spans 347 residues: NADH-quinone oxidoreductase subunit H (347 aa).

9 helical membrane-spanning segments follow: residues 13–33 (LIIALKSVVLLVVLLIVVAYL), 50–70 (PNVVGPWGLFQAFADLLKFVF), 82–102 (GVFLLAPFISAVLAMATWAVI), 115–135 (VGILYIFAISSLEVYGVIMGG), 161–181 (IGFVIVTVLLTVGSLNLTDIV), 198–218 (FLDWNWLCLFPMFVVFFISAL), 248–268 (FLLFFLGEYVAITLMCALMTV), 286–306 (VPGIIWFMLKLCFCFFLFAMV), and 325–345 (VFLPISLFMVVATATFLKVFG).

Belongs to the complex I subunit 1 family. NDH-1 is composed of 14 different subunits. Subunits NuoA, H, J, K, L, M, N constitute the membrane sector of the complex.

Its subcellular location is the cell inner membrane. The enzyme catalyses a quinone + NADH + 5 H(+)(in) = a quinol + NAD(+) + 4 H(+)(out). NDH-1 shuttles electrons from NADH, via FMN and iron-sulfur (Fe-S) centers, to quinones in the respiratory chain. The immediate electron acceptor for the enzyme in this species is believed to be ubiquinone. Couples the redox reaction to proton translocation (for every two electrons transferred, four hydrogen ions are translocated across the cytoplasmic membrane), and thus conserves the redox energy in a proton gradient. This subunit may bind ubiquinone. The protein is NADH-quinone oxidoreductase subunit H of Brucella abortus (strain 2308).